A 487-amino-acid polypeptide reads, in one-letter code: Ribosome biogenesis protein YTM1 (487 aa).

Residues 13 to 95 form a ubiquitin-like (UBL) domain region; sequence VKVTFTTNEA…ETNLTLQYVR (83 aa). WD repeat units lie at residues 122-161, 168-206, 217-256, 379-419, and 451-487; these read SPAG…LVTA, GHSA…ASGQ, GHRA…SPEA, GHTN…PASG, and GEGA…VVRE. Positions 253–277 are disordered; the sequence is SPEADASLLPNAHTSKRRKVASSVT.

It belongs to the WD repeat WDR12/YTM1 family. In terms of assembly, component of the NOP7 complex, composed of ERB1, NOP7 and YTM1. The complex is held together by ERB1, which interacts with NOP7 via its N-terminal domain and with YTM1 via a high-affinity interaction between the seven-bladed beta-propeller domains of the 2 proteins. The NOP7 complex associates with the 66S pre-ribosome. Interacts (via UBL domain) with MDN1 (via VWFA/MIDAS domain).

The protein localises to the nucleus. The protein resides in the nucleolus. It localises to the nucleoplasm. Functionally, component of the NOP7 complex, which is required for maturation of the 25S and 5.8S ribosomal RNAs and formation of the 60S ribosome. The polypeptide is Ribosome biogenesis protein YTM1 (Podospora anserina (strain S / ATCC MYA-4624 / DSM 980 / FGSC 10383) (Pleurage anserina)).